The primary structure comprises 269 residues: Ubiquinone/menaquinone biosynthesis C-methyltransferase UbiE (269 aa).

Residues threonine 92, aspartate 113, and 141 to 142 contribute to the S-adenosyl-L-methionine site; that span reads NA.

This sequence belongs to the class I-like SAM-binding methyltransferase superfamily. MenG/UbiE family.

The enzyme catalyses a 2-demethylmenaquinol + S-adenosyl-L-methionine = a menaquinol + S-adenosyl-L-homocysteine + H(+). It carries out the reaction a 2-methoxy-6-(all-trans-polyprenyl)benzene-1,4-diol + S-adenosyl-L-methionine = a 5-methoxy-2-methyl-3-(all-trans-polyprenyl)benzene-1,4-diol + S-adenosyl-L-homocysteine + H(+). It functions in the pathway quinol/quinone metabolism; menaquinone biosynthesis; menaquinol from 1,4-dihydroxy-2-naphthoate: step 2/2. It participates in cofactor biosynthesis; ubiquinone biosynthesis. Methyltransferase required for the conversion of demethylmenaquinol (DMKH2) to menaquinol (MKH2) and the conversion of 2-polyprenyl-6-methoxy-1,4-benzoquinol (DDMQH2) to 2-polyprenyl-3-methyl-6-methoxy-1,4-benzoquinol (DMQH2). In Brucella suis biovar 1 (strain 1330), this protein is Ubiquinone/menaquinone biosynthesis C-methyltransferase UbiE.